A 366-amino-acid chain; its full sequence is Cyanide hydratase (366 aa).

Residues 6 to 285 (YKAAAVTSEP…DGLMFVDIDL (280 aa)) enclose the CN hydrolase domain. Catalysis depends on Glu46, which acts as the Proton acceptor. Residue Lys128 is part of the active site. Cys163 functions as the Nucleophile in the catalytic mechanism.

The protein belongs to the carbon-nitrogen hydrolase superfamily. Nitrilase family. As to quaternary structure, oligomer of dimers, forming left-handed helical fibers.

The enzyme catalyses formamide = hydrogen cyanide + H2O. Catalyzes the hydration of cyanide to formamide. Degradation of cyanide may be important for plant pathogenic fungi in infection of cyanogenic plants. Can also transform some nitriles like 2-cyanopyridine and fumaronitrile. This Pyrenophora teres f. teres (strain 0-1) (Barley net blotch fungus) protein is Cyanide hydratase.